Consider the following 561-residue polypeptide: Putative transport protein ASA_2308 (561 aa).

The next 5 membrane-spanning stretches (helical) occupy residues 8–28, 37–57, 66–86, 90–110, and 161–181; these read LLHQ…LLLG, IGNT…GFEF, FMLF…SVFL, IHYI…TVGL, and NMGI…MLVV. RCK C-terminal domains lie at 206 to 291 and 293 to 376; these read SDNE…NYRN and KEVF…KIGF. 5 helical membrane-spanning segments follow: residues 386–406, 409–429, 450–470, 476–496, and 541–561; these read LVAF…SLVF, LEFG…MGYL, LGLA…ILDH, AVVL…GYLF, and TYAV…GFWF.

It belongs to the AAE transporter (TC 2.A.81) family. YbjL subfamily.

Its subcellular location is the cell membrane. The sequence is that of Putative transport protein ASA_2308 from Aeromonas salmonicida (strain A449).